A 71-amino-acid chain; its full sequence is Brevinin-1SN2 (71 aa).

An N-terminal signal peptide occupies residues 1 to 22 (MFTMKKSLLLIFFLGTINLSLC). Positions 23–45 (EEERNADEDEKRDGDDESDVEVQ) are cleaved as a propeptide — removed in mature form. A disulfide bridge links cysteine 65 with cysteine 71.

This sequence belongs to the frog skin active peptide (FSAP) family. Brevinin subfamily. As to expression, expressed by the skin glands.

The protein localises to the secreted. Its function is as follows. Antimicrobial peptide. Active against a variety of Gram-negative and Gram-positive bacterial strains. Active against fungus C.glabrata 090902 and C.albicans ATCC 10231. Shows hemolytic activity against human erythrocytes. The polypeptide is Brevinin-1SN2 (Sylvirana spinulosa (Fine-spined frog)).